Reading from the N-terminus, the 198-residue chain is Peptide deformylase (198 aa).

Residues cysteine 123 and histidine 167 each coordinate Fe cation. The active site involves glutamate 168. Residue histidine 171 coordinates Fe cation.

Belongs to the polypeptide deformylase family. Fe(2+) serves as cofactor.

It catalyses the reaction N-terminal N-formyl-L-methionyl-[peptide] + H2O = N-terminal L-methionyl-[peptide] + formate. Its function is as follows. Removes the formyl group from the N-terminal Met of newly synthesized proteins. Requires at least a dipeptide for an efficient rate of reaction. N-terminal L-methionine is a prerequisite for activity but the enzyme has broad specificity at other positions. This Ureaplasma parvum serovar 3 (strain ATCC 27815 / 27 / NCTC 11736) protein is Peptide deformylase.